The primary structure comprises 374 residues: MAGQAPNMLAPPTDDELLHAQADLWRHSLYFVTSMAFQCAVKLGIPTAIHRAGGTASLPDLVAALSLPPAKLPFLRRLMRLLVHSGVFAAADDTTGSAGTYRLTPLSWLLVEGEGGAPVVDGHPCQVPVVLAGTSRHFVEAAMGLAEWFRKDVPAAAPPSPFEEVHGAVLFDESMASLHPEVDTVFNQALAAYDHSGFATVLRECSEVFQGVQSLTDCRGGDGAAAKAIVEAFPHIKCTVLDFPRVIGNKRGDGVVNYVAGDMFRAIPPAQAVMLKLVLHHWSDEDCVKILTQCKKAIPARKDGGKVIIIDIVIGAPSGPLLEAQLLMDVGMMVATKGRQRDENDWRDLFKKAGFNNYKIVKKLRARAVFEVYP.

Asp-242, Asp-262, Met-263, and Lys-276 together coordinate S-adenosyl-L-homocysteine. His-280 serves as the catalytic Proton acceptor.

It belongs to the class I-like SAM-binding methyltransferase superfamily. Cation-independent O-methyltransferase family. COMT subfamily.

This chain is Flavonoid O-methyltransferase-like protein Os11g0303600, found in Oryza sativa subsp. japonica (Rice).